Consider the following 305-residue polypeptide: 2-oxoacid:ferredoxin oxidoreductase subunit beta (305 aa).

3 residues coordinate [4Fe-4S] cluster: Cys-12, Cys-15, and Cys-46. Thiamine diphosphate-binding positions include 44–47 (IGCS) and His-65. A Mg(2+)-binding site is contributed by Asp-90. Residue 91-92 (GD) coordinates thiamine diphosphate. Mg(2+) contacts are provided by Asn-118 and Val-120. 122-123 (GL) lines the thiamine diphosphate pocket. Position 197 (Cys-197) interacts with [4Fe-4S] cluster.

Heterodimer composed of an alpha and a beta subunit. [4Fe-4S] cluster serves as cofactor. It depends on thiamine diphosphate as a cofactor. Mg(2+) is required as a cofactor.

It is found in the cytoplasm. The catalysed reaction is a 2-oxocarboxylate + 2 oxidized [2Fe-2S]-[ferredoxin] + CoA = an acyl-CoA + 2 reduced [2Fe-2S]-[ferredoxin] + CO2 + H(+). Catalyzes the coenzyme A-dependent oxidative decarboxylation of different 2-oxoacids such as 2-oxoglutarate, pyruvate and 2-oxobutyrate to form their CoA derivatives. In Sulfolobus sp, this protein is 2-oxoacid:ferredoxin oxidoreductase subunit beta.